The chain runs to 304 residues: MRHDHIISAKQLSRGDIETVLDHAADIAADPGAFADRHSDTLLGLLFFEPSTRTKMSFTTAMKRLGGDIVDMGSVESSSVKKGESLADTVRVVEGYTDALVLRHPMEGSAKMASEFVDVPLVNAGDGAGQHPTQTLLDLYTIRENAGFDDLTIGIMGDLKYGRTVHSLAHALTTVDASQHFISPESLQLPRSVRYDLHEAGAGIREHTELDDILPELDVLYVTRIQAERFPDESEYREVAGQYQIDGDTLAAAKDDLTVMHPLPRVDEIAHDVDETTHAQYFQQAHNGVPVRMALLDLMLGGDQ.

2 residues coordinate carbamoyl phosphate: Arg-53 and Thr-54. Lys-82 serves as a coordination point for L-aspartate. Residues Arg-103, His-131, and Gln-134 each contribute to the carbamoyl phosphate site. 2 residues coordinate L-aspartate: Arg-163 and Arg-224. 2 residues coordinate carbamoyl phosphate: Leu-263 and Pro-264.

Belongs to the aspartate/ornithine carbamoyltransferase superfamily. ATCase family. Heterooligomer of catalytic and regulatory chains.

It catalyses the reaction carbamoyl phosphate + L-aspartate = N-carbamoyl-L-aspartate + phosphate + H(+). The protein operates within pyrimidine metabolism; UMP biosynthesis via de novo pathway; (S)-dihydroorotate from bicarbonate: step 2/3. In terms of biological role, catalyzes the condensation of carbamoyl phosphate and aspartate to form carbamoyl aspartate and inorganic phosphate, the committed step in the de novo pyrimidine nucleotide biosynthesis pathway. The protein is Aspartate carbamoyltransferase catalytic subunit of Haloarcula marismortui (strain ATCC 43049 / DSM 3752 / JCM 8966 / VKM B-1809) (Halobacterium marismortui).